The following is a 729-amino-acid chain: Fatty acid oxidation complex subunit alpha (729 aa).

An enoyl-CoA hydratase/isomerase region spans residues 1 to 189 (MLYKGDTLYL…KIGLVDGVVA (189 aa)). Substrate is bound at residue Asp296. Positions 311–729 (ETPKHAAVLG…ARPVGALKTA (419 aa)) are 3-hydroxyacyl-CoA dehydrogenase. NAD(+)-binding positions include Met324, Asp343, 400-402 (VVE), Lys407, and Ser429. His450 functions as the For 3-hydroxyacyl-CoA dehydrogenase activity in the catalytic mechanism. Asn453 serves as a coordination point for NAD(+). 2 residues coordinate substrate: Asn500 and Tyr660.

In the N-terminal section; belongs to the enoyl-CoA hydratase/isomerase family. This sequence in the C-terminal section; belongs to the 3-hydroxyacyl-CoA dehydrogenase family. In terms of assembly, heterotetramer of two alpha chains (FadB) and two beta chains (FadA).

The catalysed reaction is a (3S)-3-hydroxyacyl-CoA + NAD(+) = a 3-oxoacyl-CoA + NADH + H(+). The enzyme catalyses a (3S)-3-hydroxyacyl-CoA = a (2E)-enoyl-CoA + H2O. It catalyses the reaction a 4-saturated-(3S)-3-hydroxyacyl-CoA = a (3E)-enoyl-CoA + H2O. It carries out the reaction (3S)-3-hydroxybutanoyl-CoA = (3R)-3-hydroxybutanoyl-CoA. The catalysed reaction is a (3Z)-enoyl-CoA = a 4-saturated (2E)-enoyl-CoA. The enzyme catalyses a (3E)-enoyl-CoA = a 4-saturated (2E)-enoyl-CoA. It functions in the pathway lipid metabolism; fatty acid beta-oxidation. Involved in the aerobic and anaerobic degradation of long-chain fatty acids via beta-oxidation cycle. Catalyzes the formation of 3-oxoacyl-CoA from enoyl-CoA via L-3-hydroxyacyl-CoA. It can also use D-3-hydroxyacyl-CoA and cis-3-enoyl-CoA as substrate. The chain is Fatty acid oxidation complex subunit alpha from Klebsiella pneumoniae subsp. pneumoniae (strain ATCC 700721 / MGH 78578).